Consider the following 655-residue polypeptide: Putative calcium up-regulated protein J (655 aa).

The Ricin B-type lectin domain maps to 40–181 (KSRAMLKGDN…DNVCFQWDLE (142 aa)).

Belongs to the cup family.

This Dictyostelium discoideum (Social amoeba) protein is Putative calcium up-regulated protein J (cupJ).